Here is a 302-residue protein sequence, read N- to C-terminus: Sulfate adenylyltransferase subunit 2 (302 aa).

Residues 280-302 (RQGRAIDHDQSGSMELKKRQGYF) are disordered.

Belongs to the PAPS reductase family. CysD subfamily. As to quaternary structure, heterodimer composed of CysD, the smaller subunit, and CysN.

It catalyses the reaction sulfate + ATP + H(+) = adenosine 5'-phosphosulfate + diphosphate. It participates in sulfur metabolism; hydrogen sulfide biosynthesis; sulfite from sulfate: step 1/3. Functionally, with CysN forms the ATP sulfurylase (ATPS) that catalyzes the adenylation of sulfate producing adenosine 5'-phosphosulfate (APS) and diphosphate, the first enzymatic step in sulfur assimilation pathway. APS synthesis involves the formation of a high-energy phosphoric-sulfuric acid anhydride bond driven by GTP hydrolysis by CysN coupled to ATP hydrolysis by CysD. The polypeptide is Sulfate adenylyltransferase subunit 2 (Vibrio atlanticus (strain LGP32) (Vibrio splendidus (strain Mel32))).